Reading from the N-terminus, the 449-residue chain is Cysteine--tRNA ligase (449 aa).

Cys-30 contacts Zn(2+). The 'HIGH' region motif lies at 32-42 (PTVYDRAHLGN). Zn(2+)-binding residues include Cys-210, His-235, and Glu-239. The 'KMSKS' region motif lies at 268–272 (KMSKS). Residue Lys-271 coordinates ATP.

The protein belongs to the class-I aminoacyl-tRNA synthetase family. As to quaternary structure, monomer. The cofactor is Zn(2+).

It localises to the cytoplasm. The enzyme catalyses tRNA(Cys) + L-cysteine + ATP = L-cysteinyl-tRNA(Cys) + AMP + diphosphate. The chain is Cysteine--tRNA ligase from Acidiphilium cryptum (strain JF-5).